Here is a 175-residue protein sequence, read N- to C-terminus: Translation initiation factor IF-3 (175 aa).

It belongs to the IF-3 family. Monomer.

It localises to the cytoplasm. Functionally, IF-3 binds to the 30S ribosomal subunit and shifts the equilibrium between 70S ribosomes and their 50S and 30S subunits in favor of the free subunits, thus enhancing the availability of 30S subunits on which protein synthesis initiation begins. This Aquifex aeolicus (strain VF5) protein is Translation initiation factor IF-3.